The sequence spans 166 residues: Interferon gamma (166 aa).

The first 23 residues, 1–23 (MKYTSYILAFQLCIVLGSLGCYC), serve as a signal peptide directing secretion. The residue at position 24 (Gln-24) is a Pyrrolidone carboxylic acid. N-linked (GlcNAc...) asparagine glycosylation occurs at Asn-48. N-linked (GlcNAc...) asparagine; in dimeric form glycosylation occurs at Asn-120. A disordered region spans residues 147–166 (AKTGKRKRSQMLFRGRRASQ). Residues 149–166 (TGKRKRSQMLFRGRRASQ) are compositionally biased toward basic residues. Positions 162-166 (RRASQ) are excised as a propeptide.

The protein belongs to the type II (or gamma) interferon family. As to quaternary structure, homodimer. Interacts with IFNGR1 (via extracellular domain); this interaction promotes IFNGR1 dimerization. Post-translationally, proteolytic processing produces C-terminal heterogeneity, with proteins ending alternatively at Gly-150, Met-157 or Gly-161. Released primarily from activated T lymphocytes.

Its subcellular location is the secreted. In terms of biological role, type II interferon produced by immune cells such as T-cells and NK cells that plays crucial roles in antimicrobial, antiviral, and antitumor responses by activating effector immune cells and enhancing antigen presentation. Primarily signals through the JAK-STAT pathway after interaction with its receptor IFNGR1 to affect gene regulation. Upon IFNG binding, IFNGR1 intracellular domain opens out to allow association of downstream signaling components JAK2, JAK1 and STAT1, leading to STAT1 activation, nuclear translocation and transcription of IFNG-regulated genes. Many of the induced genes are transcription factors such as IRF1 that are able to further drive regulation of a next wave of transcription. Plays a role in class I antigen presentation pathway by inducing a replacement of catalytic proteasome subunits with immunoproteasome subunits. In turn, increases the quantity, quality, and repertoire of peptides for class I MHC loading. Increases the efficiency of peptide generation also by inducing the expression of activator PA28 that associates with the proteasome and alters its proteolytic cleavage preference. Up-regulates as well MHC II complexes on the cell surface by promoting expression of several key molecules such as cathepsins B/CTSB, H/CTSH, and L/CTSL. Participates in the regulation of hematopoietic stem cells during development and under homeostatic conditions by affecting their development, quiescence, and differentiation. The chain is Interferon gamma (IFNG) from Homo sapiens (Human).